A 370-amino-acid chain; its full sequence is Peptide chain release factor 1 (370 aa).

Gln-239 bears the N5-methylglutamine mark.

Belongs to the prokaryotic/mitochondrial release factor family. Methylated by PrmC. Methylation increases the termination efficiency of RF1.

The protein resides in the cytoplasm. Peptide chain release factor 1 directs the termination of translation in response to the peptide chain termination codons UAG and UAA. This is Peptide chain release factor 1 from Bacteroides fragilis (strain ATCC 25285 / DSM 2151 / CCUG 4856 / JCM 11019 / LMG 10263 / NCTC 9343 / Onslow / VPI 2553 / EN-2).